The primary structure comprises 1435 residues: Gag-Pol polyprotein (1435 aa).

The N-myristoyl glycine; by host moiety is linked to residue glycine 2. An interaction with Gp41 region spans residues valine 7 to leucine 31. The interaction with host CALM1 stretch occupies residues leucine 8–arginine 43. The segment at lysine 12 to isoleucine 19 is interaction with host AP3D1. The interval aspartate 14 to histidine 33 is interaction with membrane phosphatidylinositol 4,5-bisphosphate and RNA. Residues tryptophan 16–arginine 22 carry the Nuclear export signal motif. Positions arginine 26–lysine 32 match the Nuclear localization signal motif. An interaction with membrane phosphatidylinositol 4,5-bisphosphate region spans residues glutamate 72–serine 76. The tract at residues glutamine 107–proline 126 is disordered. Polar residues predominate over residues lysine 108 to proline 126. Position 131 is a phosphotyrosine; by host (tyrosine 131). An interaction with human PPIA/CYPA and NUP153 region spans residues asparagine 188 to glutamine 226. A dimerization/Multimerization of capsid protein p24 region spans residues tyrosine 276 to leucine 362. 2 consecutive CCHC-type zinc fingers follow at residues isoleucine 391–alanine 408 and lysine 412–glutamate 429. The disordered stretch occupies residues glycine 444 to alanine 478. Residues glutamate 445–arginine 455 are compositionally biased toward basic and acidic residues. The tract at residues proline 489–leucine 493 is dimerization of protease. In terms of domain architecture, Peptidase A2 spans isoleucine 508–methionine 577. Aspartate 513 (for protease activity; shared with dimeric partner) is an active-site residue. Dimerization of protease regions lie at residues glycine 537 to lysine 543 and asparagine 576 to proline 588. Residues glutamate 631–leucine 821 enclose the Reverse transcriptase domain. Aspartate 697, aspartate 772, and aspartate 773 together coordinate Mg(2+). An RT 'primer grip' region spans residues phenylalanine 814–histidine 822. The Tryptophan repeat motif signature appears at tryptophan 985–tryptophan 1001. The RNase H type-1 domain maps to isoleucine 1021–arginine 1144. Mg(2+) is bound by residues aspartate 1030, glutamate 1065, aspartate 1085, and aspartate 1136. Residues aspartate 1150–glutamine 1191 form an Integrase-type zinc finger. Zn(2+)-binding residues include histidine 1159, histidine 1163, cysteine 1187, and cysteine 1190. An Integrase catalytic domain is found at valine 1201–isoleucine 1351. Residues aspartate 1211, aspartate 1263, and glutamate 1299 each coordinate Mg(2+). The segment at residues phenylalanine 1370–aspartate 1417 is a DNA-binding region (integrase-type).

In terms of assembly, homotrimer; further assembles as hexamers of trimers. Interacts with gp41 (via C-terminus). Interacts with host CALM1; this interaction induces a conformational change in the Matrix protein, triggering exposure of the myristate group. Interacts with host AP3D1; this interaction allows the polyprotein trafficking to multivesicular bodies during virus assembly. Part of the pre-integration complex (PIC) which is composed of viral genome, matrix protein, Vpr and integrase. Homodimer; the homodimer further multimerizes as homohexamers or homopentamers. Interacts with human PPIA/CYPA; This interaction stabilizes the capsid. Interacts with human NUP153. Interacts with host PDZD8; this interaction stabilizes the capsid. Interacts with monkey TRIM5; this interaction destabilizes the capsid. As to quaternary structure, homodimer, whose active site consists of two apposed aspartic acid residues. In terms of assembly, heterodimer of p66 RT and p51 RT (RT p66/p51). Heterodimerization of RT is essential for DNA polymerase activity. The overall folding of the subdomains is similar in p66 RT and p51 RT but the spatial arrangements of the subdomains are dramatically different. Homotetramer; may further associate as a homohexadecamer. Part of the pre-integration complex (PIC) which is composed of viral genome, matrix protein, Vpr and integrase. Interacts with human SMARCB1/INI1 and human PSIP1/LEDGF isoform 1. Interacts with human KPNA3; this interaction might play a role in nuclear import of the pre-integration complex. Interacts with human NUP153; this interaction might play a role in nuclear import of the pre-integration complex. Requires Mg(2+) as cofactor. Post-translationally, specific enzymatic cleavages by the viral protease yield mature proteins. The protease is released by autocatalytic cleavage. The polyprotein is cleaved during and after budding, this process is termed maturation. Proteolytic cleavage of p66 RT removes the RNase H domain to yield the p51 RT subunit. Nucleocapsid protein p7 might be further cleaved after virus entry. Tyrosine phosphorylated presumably in the virion by a host kinase. Phosphorylation is apparently not a major regulator of membrane association. In terms of processing, phosphorylated possibly by host MAPK1; this phosphorylation is necessary for Pin1-mediated virion uncoating. Post-translationally, methylated by host PRMT6, impairing its function by reducing RNA annealing and the initiation of reverse transcription.

The protein localises to the host cell membrane. It localises to the host endosome. It is found in the host multivesicular body. The protein resides in the virion membrane. Its subcellular location is the host nucleus. The protein localises to the host cytoplasm. It localises to the virion. The catalysed reaction is Specific for a P1 residue that is hydrophobic, and P1' variable, but often Pro.. It catalyses the reaction Endohydrolysis of RNA in RNA/DNA hybrids. Three different cleavage modes: 1. sequence-specific internal cleavage of RNA. Human immunodeficiency virus type 1 and Moloney murine leukemia virus enzymes prefer to cleave the RNA strand one nucleotide away from the RNA-DNA junction. 2. RNA 5'-end directed cleavage 13-19 nucleotides from the RNA end. 3. DNA 3'-end directed cleavage 15-20 nucleotides away from the primer terminus.. It carries out the reaction 3'-end directed exonucleolytic cleavage of viral RNA-DNA hybrid.. The enzyme catalyses DNA(n) + a 2'-deoxyribonucleoside 5'-triphosphate = DNA(n+1) + diphosphate. Protease: The viral protease is inhibited by many synthetic protease inhibitors (PIs), such as amprenavir, atazanavir, indinavir, loprinavir, nelfinavir, ritonavir and saquinavir. Use of protease inhibitors in tritherapy regimens permit more ambitious therapeutic strategies. Reverse transcriptase/ribonuclease H: RT can be inhibited either by nucleoside RT inhibitors (NRTIs) or by non nucleoside RT inhibitors (NNRTIs). NRTIs act as chain terminators, whereas NNRTIs inhibit DNA polymerization by binding a small hydrophobic pocket near the RT active site and inducing an allosteric change in this region. Classical NRTIs are abacavir, adefovir (PMEA), didanosine (ddI), lamivudine (3TC), stavudine (d4T), tenofovir (PMPA), zalcitabine (ddC), and zidovudine (AZT). Classical NNRTIs are atevirdine (BHAP U-87201E), delavirdine, efavirenz (DMP-266), emivirine (I-EBU), and nevirapine (BI-RG-587). The tritherapies used as a basic effective treatment of AIDS associate two NRTIs and one NNRTI. Functionally, mediates, with Gag polyprotein, the essential events in virion assembly, including binding the plasma membrane, making the protein-protein interactions necessary to create spherical particles, recruiting the viral Env proteins, and packaging the genomic RNA via direct interactions with the RNA packaging sequence (Psi). Gag-Pol polyprotein may regulate its own translation, by the binding genomic RNA in the 5'-UTR. At low concentration, the polyprotein would promote translation, whereas at high concentration, the polyprotein would encapsidate genomic RNA and then shut off translation. In terms of biological role, targets the polyprotein to the plasma membrane via a multipartite membrane-binding signal, that includes its myristoylated N-terminus. Matrix protein is part of the pre-integration complex. Implicated in the release from host cell mediated by Vpu. Binds to RNA. Its function is as follows. Forms the conical core that encapsulates the genomic RNA-nucleocapsid complex in the virion. Most core are conical, with only 7% tubular. The core is constituted by capsid protein hexamer subunits. The core is disassembled soon after virion entry. Host restriction factors such as TRIM5-alpha or TRIMCyp bind retroviral capsids and cause premature capsid disassembly, leading to blocks in reverse transcription. Capsid restriction by TRIM5 is one of the factors which restricts HIV-1 to the human species. Host PIN1 apparently facilitates the virion uncoating. On the other hand, interactions with PDZD8 or CYPA stabilize the capsid. Encapsulates and protects viral dimeric unspliced genomic RNA (gRNA). Binds these RNAs through its zinc fingers. Acts as a nucleic acid chaperone which is involved in rearangement of nucleic acid secondary structure during gRNA retrotranscription. Also facilitates template switch leading to recombination. As part of the polyprotein, participates in gRNA dimerization, packaging, tRNA incorporation and virion assembly. Functionally, aspartyl protease that mediates proteolytic cleavages of Gag and Gag-Pol polyproteins during or shortly after the release of the virion from the plasma membrane. Cleavages take place as an ordered, step-wise cascade to yield mature proteins. This process is called maturation. Displays maximal activity during the budding process just prior to particle release from the cell. Also cleaves Nef and Vif, probably concomitantly with viral structural proteins on maturation of virus particles. Hydrolyzes host EIF4GI and PABP1 in order to shut off the capped cellular mRNA translation. The resulting inhibition of cellular protein synthesis serves to ensure maximal viral gene expression and to evade host immune response. Also mediates cleavage of host YTHDF3. Mediates cleavage of host CARD8, thereby activating the CARD8 inflammasome, leading to the clearance of latent HIV-1 in patient CD4(+) T-cells after viral reactivation; in contrast, HIV-1 can evade CARD8-sensing when its protease remains inactive in infected cells prior to viral budding. In terms of biological role, multifunctional enzyme that converts the viral RNA genome into dsDNA in the cytoplasm, shortly after virus entry into the cell. This enzyme displays a DNA polymerase activity that can copy either DNA or RNA templates, and a ribonuclease H (RNase H) activity that cleaves the RNA strand of RNA-DNA heteroduplexes in a partially processive 3' to 5' endonucleasic mode. Conversion of viral genomic RNA into dsDNA requires many steps. A tRNA(3)-Lys binds to the primer-binding site (PBS) situated at the 5'-end of the viral RNA. RT uses the 3' end of the tRNA primer to perform a short round of RNA-dependent minus-strand DNA synthesis. The reading proceeds through the U5 region and ends after the repeated (R) region which is present at both ends of viral RNA. The portion of the RNA-DNA heteroduplex is digested by the RNase H, resulting in a ssDNA product attached to the tRNA primer. This ssDNA/tRNA hybridizes with the identical R region situated at the 3' end of viral RNA. This template exchange, known as minus-strand DNA strong stop transfer, can be either intra- or intermolecular. RT uses the 3' end of this newly synthesized short ssDNA to perform the RNA-dependent minus-strand DNA synthesis of the whole template. RNase H digests the RNA template except for two polypurine tracts (PPTs) situated at the 5'-end and near the center of the genome. It is not clear if both polymerase and RNase H activities are simultaneous. RNase H probably can proceed both in a polymerase-dependent (RNA cut into small fragments by the same RT performing DNA synthesis) and a polymerase-independent mode (cleavage of remaining RNA fragments by free RTs). Secondly, RT performs DNA-directed plus-strand DNA synthesis using the PPTs that have not been removed by RNase H as primers. PPTs and tRNA primers are then removed by RNase H. The 3' and 5' ssDNA PBS regions hybridize to form a circular dsDNA intermediate. Strand displacement synthesis by RT to the PBS and PPT ends produces a blunt ended, linear dsDNA copy of the viral genome that includes long terminal repeats (LTRs) at both ends. Its function is as follows. Catalyzes viral DNA integration into the host chromosome, by performing a series of DNA cutting and joining reactions. This enzyme activity takes place after virion entry into a cell and reverse transcription of the RNA genome in dsDNA. The first step in the integration process is 3' processing. This step requires a complex comprising the viral genome, matrix protein, Vpr and integrase. This complex is called the pre-integration complex (PIC). The integrase protein removes 2 nucleotides from each 3' end of the viral DNA, leaving recessed CA OH's at the 3' ends. In the second step, the PIC enters cell nucleus. This process is mediated through integrase and Vpr proteins, and allows the virus to infect a non dividing cell. This ability to enter the nucleus is specific of lentiviruses, other retroviruses cannot and rely on cell division to access cell chromosomes. In the third step, termed strand transfer, the integrase protein joins the previously processed 3' ends to the 5' ends of strands of target cellular DNA at the site of integration. The 5'-ends are produced by integrase-catalyzed staggered cuts, 5 bp apart. A Y-shaped, gapped, recombination intermediate results, with the 5'-ends of the viral DNA strands and the 3' ends of target DNA strands remaining unjoined, flanking a gap of 5 bp. The last step is viral DNA integration into host chromosome. This involves host DNA repair synthesis in which the 5 bp gaps between the unjoined strands are filled in and then ligated. Since this process occurs at both cuts flanking the HIV genome, a 5 bp duplication of host DNA is produced at the ends of HIV-1 integration. Alternatively, Integrase may catalyze the excision of viral DNA just after strand transfer, this is termed disintegration. The chain is Gag-Pol polyprotein (gag-pol) from Human immunodeficiency virus type 1 group M subtype G (isolate 92NG083) (HIV-1).